The sequence spans 200 residues: Holliday junction branch migration complex subunit RuvA (200 aa).

A domain I region spans residues 1-63 (MIASVRGVVT…EDSLTLYGFA (63 aa)). The domain II stretch occupies residues 64 to 142 (DDNAKALFEL…PVPVGGDGAA (79 aa)). The interval 143–151 (GVTTGAWPE) is flexible linker. The domain III stretch occupies residues 151–200 (EQVRQALVGLGWTAGQAEQAVAAVAETVDGEVPPVPVLLRQAIRLLGRTR).

The protein belongs to the RuvA family. As to quaternary structure, homotetramer. Forms an RuvA(8)-RuvB(12)-Holliday junction (HJ) complex. HJ DNA is sandwiched between 2 RuvA tetramers; dsDNA enters through RuvA and exits via RuvB. An RuvB hexamer assembles on each DNA strand where it exits the tetramer. Each RuvB hexamer is contacted by two RuvA subunits (via domain III) on 2 adjacent RuvB subunits; this complex drives branch migration. In the full resolvosome a probable DNA-RuvA(4)-RuvB(12)-RuvC(2) complex forms which resolves the HJ.

The protein resides in the cytoplasm. In terms of biological role, the RuvA-RuvB-RuvC complex processes Holliday junction (HJ) DNA during genetic recombination and DNA repair, while the RuvA-RuvB complex plays an important role in the rescue of blocked DNA replication forks via replication fork reversal (RFR). RuvA specifically binds to HJ cruciform DNA, conferring on it an open structure. The RuvB hexamer acts as an ATP-dependent pump, pulling dsDNA into and through the RuvAB complex. HJ branch migration allows RuvC to scan DNA until it finds its consensus sequence, where it cleaves and resolves the cruciform DNA. The protein is Holliday junction branch migration complex subunit RuvA of Salinispora arenicola (strain CNS-205).